A 377-amino-acid polypeptide reads, in one-letter code: Endoplasmic reticulum-Golgi intermediate compartment protein 2 (377 aa).

Over 1–33 (MRRLNRKKTLSLVKELDAFPKVPESYVETSASG) the chain is Cytoplasmic. The helical transmembrane segment at 34–54 (GTVSLIAFTTMALLTIMEFSV) threads the bilayer. Topologically, residues 55–319 (YQDTWMKYEY…PFWQFFVRLC (265 aa)) are lumenal. A helical transmembrane segment spans residues 320 to 340 (GIVGGIFSTTGMLHGIGKFIV). Over 341–377 (EIICCRFRLGSYKPVNSVPFEDGHTDNHLPLLENNTH) the chain is Cytoplasmic.

This sequence belongs to the ERGIC family. May form a heteromeric complex composed of ERGIC1, ERGIC2 and ERGIC3. Interacts with ERGIC3, the interaction is required for the stable expression of both proteins. May interact with EEF1A1.

The protein localises to the endoplasmic reticulum-Golgi intermediate compartment membrane. It is found in the golgi apparatus. The protein resides in the cis-Golgi network membrane. It localises to the endoplasmic reticulum membrane. Its subcellular location is the cytoplasm. The protein localises to the nucleus. Its function is as follows. Possible role in transport between endoplasmic reticulum and Golgi. The sequence is that of Endoplasmic reticulum-Golgi intermediate compartment protein 2 (ERGIC2) from Macaca fascicularis (Crab-eating macaque).